A 308-amino-acid chain; its full sequence is tRNA uridine(34) hydroxylase (308 aa).

Residues 129–223 (QEKDVLILDA…YGKHPETQGV (95 aa)) enclose the Rhodanese domain. Residue cysteine 183 is the Cysteine persulfide intermediate of the active site.

It belongs to the TrhO family.

It catalyses the reaction uridine(34) in tRNA + AH2 + O2 = 5-hydroxyuridine(34) in tRNA + A + H2O. Catalyzes oxygen-dependent 5-hydroxyuridine (ho5U) modification at position 34 in tRNAs. The sequence is that of tRNA uridine(34) hydroxylase from Aster yellows witches'-broom phytoplasma (strain AYWB).